The primary structure comprises 160 residues: 3-hydroxyacyl-[acyl-carrier-protein] dehydratase FabZ (160 aa).

The active site involves His63.

It belongs to the thioester dehydratase family. FabZ subfamily.

It is found in the cytoplasm. It carries out the reaction a (3R)-hydroxyacyl-[ACP] = a (2E)-enoyl-[ACP] + H2O. Its function is as follows. Involved in unsaturated fatty acids biosynthesis. Catalyzes the dehydration of short chain beta-hydroxyacyl-ACPs and long chain saturated and unsaturated beta-hydroxyacyl-ACPs. This Xylella fastidiosa (strain M12) protein is 3-hydroxyacyl-[acyl-carrier-protein] dehydratase FabZ.